A 1960-amino-acid chain; its full sequence is Exophilin-5 (1960 aa).

One can recognise a RabBD domain in the interval 7-63 (GFDFSFLNEEEARKILQVLERNEELRRAEKDRISKLQKTKRDIRWLQGATGEWFEEI). Polar residues-rich tracts occupy residues 325-334 (ASPATGSFTA), 342-366 (DTQNKSSFTPVRHQQSPKRTPLSSI), and 635-645 (SQSSSFPDSTA). 5 disordered regions span residues 325–366 (ASPA…LSSI), 616–645 (TPASSFRTPFPLSPDDGRESQSSSFPDSTA), 672–720 (HSTD…TGLP), 734–835 (DFQN…SSNT), and 910–976 (FSRS…KGRV). Over residues 673 to 682 (STDSLSLTDT) the composition is skewed to low complexity. Basic and acidic residues predominate over residues 692–707 (NSEKDMDVSVSKDEQL). Phosphoserine occurs at positions 799 and 802. Polar residues-rich tracts occupy residues 808-835 (ESGTATSLPSPNQGCHQKTGSNEESSNT) and 910-920 (FSRSLSDQDPG). Residues 921–932 (QEQREEKDKATK) show a composition bias toward basic and acidic residues. Positions 933 to 945 (SQDNQLAVNSTDN) are enriched in polar residues. Position 1027 is a phosphoserine (Ser-1027). Positions 1035–1095 (QESKGTVASV…PKATKKMTDM (61 aa)) are disordered. The segment covering 1062-1074 (GKSTSDKPSSPES) has biased composition (polar residues). Ser-1083 and Ser-1117 each carry phosphoserine. Disordered regions lie at residues 1291–1375 (AQVQ…LSRE), 1389–1493 (PLLH…DSES), and 1510–1759 (EAQP…EPHL). Positions 1318–1336 (PESKDVSQLPDRETSKSTL) are enriched in basic and acidic residues. Residues 1356-1365 (KEISPSNVSK) are compositionally biased toward polar residues. The segment covering 1392–1403 (HQEKGAGKEHTK) has biased composition (basic and acidic residues). Composition is skewed to polar residues over residues 1470–1493 (RETSGTTGSDCQNPTDKMLSDSES) and 1520–1533 (SEASQAGSQETNTA). Ser-1493 bears the Phosphoserine mark. Basic and acidic residues-rich tracts occupy residues 1534–1546 (EMRKVEDEEHMLT) and 1561–1571 (TNTDETKDRYS). Basic residues predominate over residues 1572–1586 (GKHRLAAISKASKRI). Residues 1637-1657 (ESSQMNVDKSETLLQETTVSS) are compositionally biased toward polar residues. A phosphoserine mark is found at Ser-1724, Ser-1739, Ser-1789, and Ser-1819. Positions 1732–1741 (TQKSTINSHC) are enriched in polar residues. Disordered regions lie at residues 1828-1847 (ESESWTSYSNRTRGPKSTSS) and 1906-1960 (VNSP…ESEL). Positions 1939 to 1950 (WDTDTTTDDEYY) are enriched in acidic residues. A compositionally biased stretch (basic and acidic residues) spans 1951 to 1960 (LDEKDKESEL).

In terms of assembly, interacts with RAB27A.

In terms of biological role, may act as Rab effector protein and play a role in vesicle trafficking. This is Exophilin-5 from Mus musculus (Mouse).